Here is a 93-residue protein sequence, read N- to C-terminus: Putative septation protein SpoVG (93 aa).

This sequence belongs to the SpoVG family.

Could be involved in septation. This Lachnoclostridium phytofermentans (strain ATCC 700394 / DSM 18823 / ISDg) (Clostridium phytofermentans) protein is Putative septation protein SpoVG.